The primary structure comprises 185 residues: Shikimate kinase (185 aa).

21–26 (GVGKTT) contacts ATP. Position 25 (Thr-25) interacts with Mg(2+). Substrate contacts are provided by Asp-43, Arg-67, and Gly-90. Arg-129 is a binding site for ATP. Arg-147 is a binding site for substrate.

This sequence belongs to the shikimate kinase family. In terms of assembly, monomer. Requires Mg(2+) as cofactor.

It is found in the cytoplasm. The catalysed reaction is shikimate + ATP = 3-phosphoshikimate + ADP + H(+). It participates in metabolic intermediate biosynthesis; chorismate biosynthesis; chorismate from D-erythrose 4-phosphate and phosphoenolpyruvate: step 5/7. Catalyzes the specific phosphorylation of the 3-hydroxyl group of shikimic acid using ATP as a cosubstrate. The protein is Shikimate kinase of Bacillus pumilus (strain SAFR-032).